We begin with the raw amino-acid sequence, 261 residues long: Cytochrome c oxidase subunit 3 (261 aa).

Topologically, residues 1 to 15 are mitochondrial matrix; it reads MAHQAHAYHMVDPSP. A helical transmembrane segment spans residues 16–34; that stretch reads WPLTGAVAALLMTSGLAVW. Residues 35 to 40 lie on the Mitochondrial intermembrane side of the membrane; it reads FHFHSM. A helical transmembrane segment spans residues 41–66; sequence YLLYLGLTLLLLTMVQWWRDIIREGT. Residues 67–72 lie on the Mitochondrial matrix side of the membrane; that stretch reads FQGHHT. A helical transmembrane segment spans residues 73-105; sequence PPVQKGLRYGMILFITSEVFFFLGFFWAFYHSS. Topologically, residues 106-128 are mitochondrial intermembrane; sequence LAPTPELGGCWPPTGIYPLDPFE. A helical transmembrane segment spans residues 129-152; that stretch reads VPLLNTAVLLASGVTVTWAHHSLM. Residues 153–155 are Mitochondrial matrix-facing; the sequence is EGN. The helical transmembrane segment at 156-183 threads the bilayer; the sequence is RKEAIQALTLTVLLGFYFTALQAMEYYE. At 184–190 the chain is on the mitochondrial intermembrane side; sequence APFTIAD. Residues 191 to 223 form a helical membrane-spanning segment; sequence GVYGSTFFVATGFHGLHVIIGSTFLMVCLLRQI. At 224–232 the chain is on the mitochondrial matrix side; it reads QYHFTSEHH. A helical membrane pass occupies residues 233–256; that stretch reads FGFERAAWYWHFVDVVWLFLYVSI. The Mitochondrial intermembrane segment spans residues 257–261; that stretch reads YWWGS.

This sequence belongs to the cytochrome c oxidase subunit 3 family. As to quaternary structure, component of the cytochrome c oxidase (complex IV, CIV), a multisubunit enzyme composed of 14 subunits. The complex is composed of a catalytic core of 3 subunits MT-CO1, MT-CO2 and MT-CO3, encoded in the mitochondrial DNA, and 11 supernumerary subunits COX4I, COX5A, COX5B, COX6A, COX6B, COX6C, COX7A, COX7B, COX7C, COX8 and NDUFA4, which are encoded in the nuclear genome. The complex exists as a monomer or a dimer and forms supercomplexes (SCs) in the inner mitochondrial membrane with NADH-ubiquinone oxidoreductase (complex I, CI) and ubiquinol-cytochrome c oxidoreductase (cytochrome b-c1 complex, complex III, CIII), resulting in different assemblies (supercomplex SCI(1)III(2)IV(1) and megacomplex MCI(2)III(2)IV(2)).

It is found in the mitochondrion inner membrane. The enzyme catalyses 4 Fe(II)-[cytochrome c] + O2 + 8 H(+)(in) = 4 Fe(III)-[cytochrome c] + 2 H2O + 4 H(+)(out). Its function is as follows. Component of the cytochrome c oxidase, the last enzyme in the mitochondrial electron transport chain which drives oxidative phosphorylation. The respiratory chain contains 3 multisubunit complexes succinate dehydrogenase (complex II, CII), ubiquinol-cytochrome c oxidoreductase (cytochrome b-c1 complex, complex III, CIII) and cytochrome c oxidase (complex IV, CIV), that cooperate to transfer electrons derived from NADH and succinate to molecular oxygen, creating an electrochemical gradient over the inner membrane that drives transmembrane transport and the ATP synthase. Cytochrome c oxidase is the component of the respiratory chain that catalyzes the reduction of oxygen to water. Electrons originating from reduced cytochrome c in the intermembrane space (IMS) are transferred via the dinuclear copper A center (CU(A)) of subunit 2 and heme A of subunit 1 to the active site in subunit 1, a binuclear center (BNC) formed by heme A3 and copper B (CU(B)). The BNC reduces molecular oxygen to 2 water molecules using 4 electrons from cytochrome c in the IMS and 4 protons from the mitochondrial matrix. The sequence is that of Cytochrome c oxidase subunit 3 (MT-CO3) from Squalus acanthias (Spiny dogfish).